The primary structure comprises 310 residues: Translocator protein BipD (310 aa).

2 coiled-coil regions span residues 127-171 (DPIL…LQDY) and 250-299 (DTAR…AIST).

It belongs to the invasin protein D family.

It is found in the secreted. Required for invasion of epithelial cells, as well as for survival within host cells, escape from endocytic vesicles and subsequent actin-tail formation. Probably regulates the secretion of effectors BipB and BipC and their final integration into the target cell membrane. This chain is Translocator protein BipD (bipD), found in Burkholderia thailandensis (strain ATCC 700388 / DSM 13276 / CCUG 48851 / CIP 106301 / E264).